The primary structure comprises 217 residues: Small ribosomal subunit protein uS3c (217 aa).

A KH type-2 domain is found at 47-119 (VRTHIKSSSN…KLHIAIEKVA (73 aa)).

The protein belongs to the universal ribosomal protein uS3 family. In terms of assembly, part of the 30S ribosomal subunit.

The protein localises to the plastid. Its subcellular location is the chloroplast. The polypeptide is Small ribosomal subunit protein uS3c (rps3) (Pinus thunbergii (Japanese black pine)).